The primary structure comprises 76 residues: U-scoloptoxin(13)-Sm1a (76 aa).

Residues 1 to 22 (MAYICAXTLAFLLCVNTGIIQA) form the signal peptide.

Belongs to the scoloptoxin-13 family. Post-translationally, contains 4 disulfide bonds. As to expression, expressed by the venom gland.

It is found in the secreted. In Scolopendra morsitans (Tanzanian blue ringleg centipede), this protein is U-scoloptoxin(13)-Sm1a.